Here is a 305-residue protein sequence, read N- to C-terminus: N-acetylneuraminate lyase A (305 aa).

Aceneuramate is bound by residues Thr51 and Thr52. Catalysis depends on Tyr143, which acts as the Proton donor. The active-site Schiff-base intermediate with substrate is Lys173. Residues Ser175, Gly197, Asp199, Glu200, and Ser216 each contribute to the aceneuramate site.

Belongs to the DapA family. NanA subfamily. As to quaternary structure, homotetramer.

Its subcellular location is the cytoplasm. It catalyses the reaction aceneuramate = aldehydo-N-acetyl-D-mannosamine + pyruvate. It functions in the pathway amino-sugar metabolism; N-acetylneuraminate degradation. Its function is as follows. Catalyzes the cleavage of N-acetylneuraminic acid (sialic acid) to form pyruvate and N-acetylmannosamine via a Schiff base intermediate. It prevents sialic acids from being recycled and returning to the cell surface. Involved in the N-glycolylneuraminic acid (Neu5Gc) degradation pathway. This Xenopus laevis (African clawed frog) protein is N-acetylneuraminate lyase A (npl-a).